We begin with the raw amino-acid sequence, 398 residues long: Elongation factor Tu (398 aa).

The tr-type G domain occupies 10–207 (KPHVNIGTIG…TVDEYIPEPE (198 aa)). The interval 19–26 (GHVDHGKT) is G1. Residue 19–26 (GHVDHGKT) coordinates GTP. Residue T26 coordinates Mg(2+). The G2 stretch occupies residues 63–67 (GITIN). Positions 84–87 (DAPG) are G3. Residues 84–88 (DAPGH) and 139–142 (NKVD) contribute to the GTP site. Residues 139 to 142 (NKVD) are G4. Residues 177–179 (SAL) are G5.

Belongs to the TRAFAC class translation factor GTPase superfamily. Classic translation factor GTPase family. EF-Tu/EF-1A subfamily. In terms of assembly, monomer.

It is found in the cytoplasm. The enzyme catalyses GTP + H2O = GDP + phosphate + H(+). Functionally, GTP hydrolase that promotes the GTP-dependent binding of aminoacyl-tRNA to the A-site of ribosomes during protein biosynthesis. In Streptococcus suis (strain 98HAH33), this protein is Elongation factor Tu.